The primary structure comprises 583 residues: Putative amidase C869.01 (583 aa).

Residues 1–19 (MKLQLLFLTLAQLAKHGLA) form the signal peptide. Active-site charge relay system residues include Lys-141 and Ser-222. Ser-246 (acyl-ester intermediate) is an active-site residue.

It belongs to the amidase family.

Its subcellular location is the cytoplasm. It catalyses the reaction a monocarboxylic acid amide + H2O = a monocarboxylate + NH4(+). This Schizosaccharomyces pombe (strain 972 / ATCC 24843) (Fission yeast) protein is Putative amidase C869.01.